Reading from the N-terminus, the 368-residue chain is Germination protease (368 aa).

The propeptide occupies 1–16 (MKKSELDVNQYLIRTD).

This sequence belongs to the peptidase A25 family. As to quaternary structure, homotetramer. Autoproteolytically processed. The inactive tetrameric zymogen termed p46 autoprocesses to a smaller form termed p41, which is active only during spore germination.

It carries out the reaction Endopeptidase action with P4 Glu or Asp, P1 preferably Glu &gt; Asp, P1' hydrophobic and P2' Ala.. Initiates the degradation of small, acid-soluble proteins during spore germination. This Bacillus subtilis (strain 168) protein is Germination protease (gpr).